The sequence spans 1706 residues: Brefeldin A-inhibited guanine nucleotide-exchange protein 4 (1706 aa).

The region spanning 555–742 is the SEC7 domain; it reads MLEQRRAYKI…GSLYDRVVKE (188 aa). Glutamate 657 is an active-site residue.

In terms of assembly, homodimer.

The protein localises to the cytoplasm. It is found in the cytosol. It localises to the membrane. With respect to regulation, inhibited by brefeldin A. Activates the ARF proteins by exchanging bound GDP for free GTP. Plays a role in vesicular protein sorting. This Arabidopsis thaliana (Mouse-ear cress) protein is Brefeldin A-inhibited guanine nucleotide-exchange protein 4 (BIG4).